A 114-amino-acid chain; its full sequence is Circadian clock oscillator protein KaiB (114 aa).

It belongs to the KaiB family. As to quaternary structure, may undergo a major conformational rearrangment; in the free state forms homooligomers. When bound to KaiC switches to a monomeric thioredoxin-fold (KaiB(fs)). The active oscillator complex is probably KaiC(6):KaiB(6).

Its function is as follows. Component of the KaiBC clock protein complex, which constitutes the main circadian regulator in cyanobacteria; it may modify the ATPase activity of KaiC. In terms of biological role, may be a metamorphic protein which reversibly switches between an inactive tetrameric fold and a rare, thioredoxin-like monomeric fold (KaiB(fs)). KaiB(fs) binds phospho-KaiC, and perhaps clock output effectors. In Prochlorococcus marinus (strain MIT 9211), this protein is Circadian clock oscillator protein KaiB.